Consider the following 314-residue polypeptide: Oxidoreductase NAD-binding domain-containing protein 1 (314 aa).

The signal sequence occupies residues 1-18 (MALVAGSAAYQVLRGVTG). Residues 63 to 166 (EIISPAKVCE…VGGEFCFDPQ (104 aa)) form the FAD-binding FR-type domain. Position 180–185 (180–185 (GVGINP)) interacts with NAD(+).

The chain is Oxidoreductase NAD-binding domain-containing protein 1 (oxnad1) from Xenopus tropicalis (Western clawed frog).